A 63-amino-acid chain; its full sequence is Large ribosomal subunit protein bL28 (63 aa).

Residues 1–20 (MSKRCAITGKGPMVGNNVSH) form a disordered region.

The protein belongs to the bacterial ribosomal protein bL28 family.

The protein is Large ribosomal subunit protein bL28 of Campylobacter concisus (strain 13826).